The sequence spans 425 residues: Trigger factor (425 aa).

The PPIase FKBP-type domain occupies 158–231 (GDLVRVNMEV…VEEVYKRTLP (74 aa)).

Belongs to the FKBP-type PPIase family. Tig subfamily.

The protein resides in the cytoplasm. It catalyses the reaction [protein]-peptidylproline (omega=180) = [protein]-peptidylproline (omega=0). Functionally, involved in protein export. Acts as a chaperone by maintaining the newly synthesized protein in an open conformation. Functions as a peptidyl-prolyl cis-trans isomerase. The protein is Trigger factor (tig) of Thermotoga maritima (strain ATCC 43589 / DSM 3109 / JCM 10099 / NBRC 100826 / MSB8).